The following is a 246-amino-acid chain: 14-3-3 protein eta (246 aa).

Position 2 is an N-acetylglycine (G2). Phosphoserine occurs at positions 25 and 59.

Belongs to the 14-3-3 family. Homodimer. Interacts with many nuclear hormone receptors and cofactors including AR, ESR1, ESR2, MC2R, NR3C1, NRIP1, PPARBP and THRA. Interacts with ABL1 (phosphorylated form); the interaction retains it in the cytoplasm. Weakly interacts with CDKN1B. Interacts with ARHGEF28 and CDK16. Interacts with GAB2. Interacts with KCNK18 in a phosphorylation-dependent manner. Interacts with SAMSN1. Interacts with the 'Ser-241' phosphorylated form of PDPK1. Interacts with the 'Thr-369' phosphorylated form of DAPK2. Interacts with PI4KB, TBC1D22A and TBC1D22B. Interacts with SLITRK1. Interacts with MEFV. Phosphorylated on Ser-59 by protein kinase C delta type catalytic subunit in a sphingosine-dependent fashion.

The protein localises to the cytoplasm. In terms of biological role, adapter protein implicated in the regulation of a large spectrum of both general and specialized signaling pathways. Binds to a large number of partners, usually by recognition of a phosphoserine or phosphothreonine motif. Binding generally results in the modulation of the activity of the binding partner. Negatively regulates the kinase activity of PDPK1. The sequence is that of 14-3-3 protein eta (YWHAH) from Bos taurus (Bovine).